Consider the following 136-residue polypeptide: Diuretic hormone 41 (136 aa).

Residues 1 to 26 (MMWWAVWCAAMVAGSVFTAAAPPTDS) form the signal peptide. Residues 27 to 76 (IDLMQMDPSLADDESLGFAMQSLSGRYAAAPWLYLLADVSHDPQNGSDRV) constitute a propeptide that is removed on maturation. Ile-119 carries the isoleucine amide modification. The propeptide occupies 123–136 (GFHWAPSAKAAKFY).

This sequence belongs to the sauvagine/corticotropin-releasing factor/urotensin I family.

The protein localises to the secreted. Its function is as follows. Regulation of fluid secretion. The polypeptide is Diuretic hormone 41 (dh41) (Bombyx mori (Silk moth)).